A 616-amino-acid chain; its full sequence is Carboxylic acid transporter protein homolog (616 aa).

Over residues 1–11 (MSSSITDEKIS) the composition is skewed to basic and acidic residues. Residues 1–65 (MSSSITDEKI…LYHNPSLPAQ (65 aa)) form a disordered region. Ser-2 is modified (N-acetylserine). The Cytoplasmic portion of the chain corresponds to 2–140 (SSSITDEKIS…LRKMTWQNWN (139 aa)). Ser-4 carries the phosphoserine modification. Lys-9 participates in a covalent cross-link: Glycyl lysine isopeptide (Lys-Gly) (interchain with G-Cter in ubiquitin). Residues Ser-11, Ser-61, and Ser-66 each carry the phosphoserine modification. Thr-70 is subject to Phosphothreonine. Residues 141 to 161 (YFFMGYFAWLSAAWAFFCVSV) traverse the membrane as a helical segment. Residues 162–176 (SVAPLAELYDRPTKD) lie on the Extracellular side of the membrane. The helical transmembrane segment at 177–197 (ITWGLGLVLFVRSAGAVIFGL) threads the bilayer. The Cytoplasmic segment spans residues 198–205 (WTDKSSRK). A helical transmembrane segment spans residues 206–226 (WPYITCLFLFVIAQLCTPWCD). At 227–230 (TYEK) the chain is on the extracellular side. The helical transmembrane segment at 231–251 (FLGVRWITGIAMGGIYGCASA) threads the bilayer. The Cytoplasmic segment spans residues 252-263 (TAIEDAPVKARS). The chain crosses the membrane as a helical span at residues 264 to 284 (FLSGLFFSAYAMGFIFAIIFY). At 285–296 (RAFGYFRDDGWK) the chain is on the extracellular side. Residues 297–317 (ILFWFSIFLPILLIFWRLLWP) traverse the membrane as a helical segment. The Cytoplasmic portion of the chain corresponds to 318-363 (ETKYFTKVLKARKLILSDAVKANGGEPLPKANFKQKMVSMKRTVQK). Lys-338 participates in a covalent cross-link: Glycyl lysine isopeptide (Lys-Gly) (interchain with G-Cter in ubiquitin). Residues 364 to 384 (YWLLFAYLVVLLVGPNYLTHA) form a helical membrane-spanning segment. The Extracellular segment spans residues 385–402 (SQDLLPTMLRAQLGLSKD). The chain crosses the membrane as a helical span at residues 403-423 (AVTVIVVVTNIGAICGGMIFG). The Cytoplasmic portion of the chain corresponds to 424 to 432 (QFMEVTGRR). A helical membrane pass occupies residues 433-453 (LGLLIACTMGGCFTYPAFMLR). At 454-457 (SEKA) the chain is on the extracellular side. Residues 458–478 (ILGAGFMLYFCVFGVWGILPI) traverse the membrane as a helical segment. Topologically, residues 479-489 (HLAELAPADAR) are cytoplasmic. A helical membrane pass occupies residues 490 to 510 (ALVAGLSYQLGNLASAAASTI). At 511–535 (ETQLADRYPLERDASGAVIKEDYAK) the chain is on the extracellular side. A helical membrane pass occupies residues 536–556 (VMAILTGSVFIFTFACVFVGH). At 557-616 (EKFHRDLSSPVMKKYINQVEEYEADGLSISDIVEQKTECASVKMIDSNVSKTYEEHIETV) the chain is on the cytoplasmic side. Phosphoserine is present on residues Ser-584, Ser-603, and Ser-606.

This sequence belongs to the major facilitator superfamily. Sugar transporter (TC 2.A.1.1) family.

Its subcellular location is the membrane. In terms of biological role, essential to lactate transport. The chain is Carboxylic acid transporter protein homolog (JEN1) from Saccharomyces cerevisiae (strain ATCC 204508 / S288c) (Baker's yeast).